A 261-amino-acid polypeptide reads, in one-letter code: Imidazole glycerol phosphate synthase subunit HisF (261 aa).

Active-site residues include aspartate 16 and aspartate 135.

The protein belongs to the HisA/HisF family. Heterodimer of HisH and HisF.

It is found in the cytoplasm. The enzyme catalyses 5-[(5-phospho-1-deoxy-D-ribulos-1-ylimino)methylamino]-1-(5-phospho-beta-D-ribosyl)imidazole-4-carboxamide + L-glutamine = D-erythro-1-(imidazol-4-yl)glycerol 3-phosphate + 5-amino-1-(5-phospho-beta-D-ribosyl)imidazole-4-carboxamide + L-glutamate + H(+). The protein operates within amino-acid biosynthesis; L-histidine biosynthesis; L-histidine from 5-phospho-alpha-D-ribose 1-diphosphate: step 5/9. Functionally, IGPS catalyzes the conversion of PRFAR and glutamine to IGP, AICAR and glutamate. The HisF subunit catalyzes the cyclization activity that produces IGP and AICAR from PRFAR using the ammonia provided by the HisH subunit. This chain is Imidazole glycerol phosphate synthase subunit HisF, found in Mycobacterium ulcerans (strain Agy99).